The sequence spans 873 residues: Kinase suppressor of Ras 1 (873 aa).

Disordered regions lie at residues 1–24, 174–230, and 251–281; these read MDRA…GAAA, EHKM…PGLS, and LHSF…PSRK. Positions 1-170 are mediates association with membranes; sequence MDRAALRAAA…ALTCLRKVTG (170 aa). The segment covering 206–216 has biased composition (polar residues); it reads ASTQGPRSISV. Phosphothreonine is present on residues Thr-256 and Thr-260. Position 297 is a phosphoserine; by MARK3 (Ser-297). Position 320 is a phosphoserine (Ser-320). The Phorbol-ester/DAG-type zinc finger occupies 333 to 377; sequence THRFSTKSWLSQVCNVCQKSMIFGVKCKHCRLKCHNKCTKEAPAC. His-334 lines the Zn(2+) pocket. At Ser-337 the chain carries Phosphoserine. Cys-346, Cys-349, Cys-359, Cys-362, His-367, Cys-370, and Cys-377 together coordinate Zn(2+). Ser-392 is modified (phosphoserine; by MARK3). Phosphothreonine is present on Thr-411. Disordered regions lie at residues 416-473 and 506-544; these read LTKK…RFSF and HEAE…PISR. Residues 429–458 show a composition bias toward low complexity; it reads SSSNPSSTTSSTPSSPAPFLTSSNPSSATT. The segment covering 506–519 has biased composition (basic and acidic residues); it reads HEAEAEEPEAGKSE. Ser-518 bears the Phosphoserine mark. A compositionally biased stretch (acidic residues) spans 520-530; that stretch reads AEDDEEDEVDD. Positions 563-833 constitute a Protein kinase domain; it reads VELGEPIGQG…MDMLERLPKL (271 aa). 569–577 serves as a coordination point for ATP; sequence IGQGRWGRV. Residue Asp-683 is the Proton acceptor of the active site. The ATP site is built by Lys-685 and Asp-700. Ser-838 carries the phosphoserine modification.

This sequence belongs to the protein kinase superfamily. TKL Ser/Thr protein kinase family. Homodimer. Heterodimerizes (via N-terminus) with BRAF (via N-terminus) in a MAP2K1/MEK1 or MAP2K2/MEK2-dependent manner. Interacts with MAP2K1/MEK1 and MAP2K2/MEK2. Binding to MAP2K1/MEK1 releases the intramolecular inhibitory interaction between KSR1 N-terminus and kinase domains which is required for the subsequent RSK1 dimerization with BRAF. Identified in a complex with AKAP13, MAP2K1 and BRAF. Interacts with AKAP13 and BRAF. Interacts with RAF and MAPK/ERK, in a Ras-dependent manner. Interacts with 14-3-3 proteins including YWHAB. Interacts with HSP90AA1/HSP90, YWHAE/14-3-3 and CDC37. The binding of 14-3-3 proteins to phosphorylated KSR1 prevents the membrane localization. Interacts with MARK3/C-TAK1. Interacts with PPP2R1A and PPP2CA. Interacts with VRK2. In terms of processing, phosphorylated on Ser-297 and, to a higher extent, on Ser-392 by MARK3. Dephosphorylated on Ser-392 by PPP2CA. Phosphorylated KSR1 is cytoplasmic and dephosphorylated KSR1 is membrane-associated. Phosphorylated by PKA at Ser-838. Phosphorylation at Ser-838 is required for cAMP-dependent activation of MAPK1 and/or MAPK3. As to expression, expressed in brain, spleen and testis. Isoform 1 is highly expressed spleen and weakly in testis, and isoform 2 is highly expressed in brain and weakly in testis.

It is found in the cytoplasm. Its subcellular location is the membrane. The protein resides in the cell membrane. It localises to the cell projection. The protein localises to the ruffle membrane. It is found in the endoplasmic reticulum membrane. The enzyme catalyses L-seryl-[protein] + ATP = O-phospho-L-seryl-[protein] + ADP + H(+). It catalyses the reaction L-threonyl-[protein] + ATP = O-phospho-L-threonyl-[protein] + ADP + H(+). Part of a multiprotein signaling complex which promotes phosphorylation of Raf family members and activation of downstream MAP kinases. Independently of its kinase activity, acts as MAP2K1/MEK1 and MAP2K2/MEK2-dependent allosteric activator of BRAF; upon binding to MAP2K1/MEK1 or MAP2K2/MEK2, dimerizes with BRAF and promotes BRAF-mediated phosphorylation of MAP2K1/MEK1 and/or MAP2K2/MEK2. Promotes activation of MAPK1 and/or MAPK3, both in response to EGF and to cAMP. Its kinase activity is unsure. Some protein kinase activity has been detected in vitro, however the physiological relevance of this activity is unknown. In Mus musculus (Mouse), this protein is Kinase suppressor of Ras 1 (Ksr1).